The primary structure comprises 212 residues: Small ribosomal subunit protein eS6 (212 aa).

This sequence belongs to the eukaryotic ribosomal protein eS6 family.

In Metallosphaera sedula (strain ATCC 51363 / DSM 5348 / JCM 9185 / NBRC 15509 / TH2), this protein is Small ribosomal subunit protein eS6.